Here is a 278-residue protein sequence, read N- to C-terminus: 4-deoxy-L-threo-5-hexosulose-uronate ketol-isomerase (278 aa).

Zn(2+) is bound by residues histidine 196, histidine 198, glutamate 203, and histidine 245.

It belongs to the KduI family. Zn(2+) serves as cofactor.

It catalyses the reaction 5-dehydro-4-deoxy-D-glucuronate = 3-deoxy-D-glycero-2,5-hexodiulosonate. It functions in the pathway glycan metabolism; pectin degradation; 2-dehydro-3-deoxy-D-gluconate from pectin: step 4/5. In terms of biological role, catalyzes the isomerization of 5-dehydro-4-deoxy-D-glucuronate to 3-deoxy-D-glycero-2,5-hexodiulosonate. This is 4-deoxy-L-threo-5-hexosulose-uronate ketol-isomerase from Pectobacterium carotovorum subsp. carotovorum (Erwinia carotovora subsp. carotovora).